We begin with the raw amino-acid sequence, 378 residues long: Quinolinate synthase (378 aa).

Iminosuccinate contacts are provided by His59 and Ser80. Cys125 contributes to the [4Fe-4S] cluster binding site. Iminosuccinate contacts are provided by residues Tyr151–Asn153 and Ser168. A [4Fe-4S] cluster-binding site is contributed by Cys212. Iminosuccinate-binding positions include His238–Glu240 and Thr255. Cys309 lines the [4Fe-4S] cluster pocket.

It belongs to the quinolinate synthase family. Type 1 subfamily. The cofactor is [4Fe-4S] cluster.

It is found in the cytoplasm. It catalyses the reaction iminosuccinate + dihydroxyacetone phosphate = quinolinate + phosphate + 2 H2O + H(+). Its pathway is cofactor biosynthesis; NAD(+) biosynthesis; quinolinate from iminoaspartate: step 1/1. Functionally, catalyzes the condensation of iminoaspartate with dihydroxyacetone phosphate to form quinolinate. In Burkholderia thailandensis (strain ATCC 700388 / DSM 13276 / CCUG 48851 / CIP 106301 / E264), this protein is Quinolinate synthase.